A 241-amino-acid polypeptide reads, in one-letter code: Carboxy-S-adenosyl-L-methionine synthase (241 aa).

S-adenosyl-L-methionine is bound by residues tyrosine 38, 63 to 65 (GCS), 88 to 89 (DN), 116 to 117 (DI), asparagine 131, and arginine 198.

It belongs to the class I-like SAM-binding methyltransferase superfamily. Cx-SAM synthase family. In terms of assembly, homodimer.

The catalysed reaction is prephenate + S-adenosyl-L-methionine = carboxy-S-adenosyl-L-methionine + 3-phenylpyruvate + H2O. Functionally, catalyzes the conversion of S-adenosyl-L-methionine (SAM) to carboxy-S-adenosyl-L-methionine (Cx-SAM). This Glaesserella parasuis serovar 5 (strain SH0165) (Haemophilus parasuis) protein is Carboxy-S-adenosyl-L-methionine synthase.